Reading from the N-terminus, the 164-residue chain is Interferon gamma (164 aa).

The signal sequence occupies residues 1 to 19; that stretch reads MTCQTYNLFVLSVIMIYYG. N-linked (GlcNAc...) asparagine glycosylation is found at Asn42 and Asn61.

This sequence belongs to the type II (or gamma) interferon family. As to quaternary structure, homodimer.

It is found in the secreted. Its function is as follows. Produced by lymphocytes activated by specific antigens or mitogens. IFN-gamma, in addition to having antiviral activity, has important immunoregulatory functions. It is a potent activator of macrophages, it has antiproliferative effects on transformed cells and it can potentiate the antiviral and antitumor effects of the type I interferons. This chain is Interferon gamma (IFNG), found in Coturnix japonica (Japanese quail).